The primary structure comprises 452 residues: Exodeoxyribonuclease 7 large subunit (452 aa).

Belongs to the XseA family. Heterooligomer composed of large and small subunits.

The protein localises to the cytoplasm. The enzyme catalyses Exonucleolytic cleavage in either 5'- to 3'- or 3'- to 5'-direction to yield nucleoside 5'-phosphates.. Functionally, bidirectionally degrades single-stranded DNA into large acid-insoluble oligonucleotides, which are then degraded further into small acid-soluble oligonucleotides. The chain is Exodeoxyribonuclease 7 large subunit from Bordetella avium (strain 197N).